Reading from the N-terminus, the 354-residue chain is Diaminopimelate epimerase, chloroplastic (354 aa).

A chloroplast-targeting transit peptide spans 1 to 44; it reads MSSATAAATATIAAAAAKLAATPAPAPSRRRLTLRGNPTARRCV. Active-site residues include cysteine 142 and cysteine 297.

It belongs to the diaminopimelate epimerase family.

The protein resides in the plastid. The protein localises to the chloroplast. It catalyses the reaction (2S,6S)-2,6-diaminopimelate = meso-2,6-diaminopimelate. It participates in amino-acid biosynthesis; L-lysine biosynthesis via DAP pathway; DL-2,6-diaminopimelate from LL-2,6-diaminopimelate: step 1/1. The chain is Diaminopimelate epimerase, chloroplastic (DAPF) from Oryza sativa subsp. japonica (Rice).